A 247-amino-acid polypeptide reads, in one-letter code: Protein ATC1/LIC4 (247 aa).

Disordered regions lie at residues 95–146 and 226–247; these read NSSA…DDQA and EKST…CPSS. The segment covering 129–146 has biased composition (polar residues); sequence QNPSHRISNVQSNSDDQA.

It is found in the cytoplasm. The protein resides in the nucleus. Involved in cation homeostasis and in the regulation of the cation stress signaling cascades. This Debaryomyces hansenii (strain ATCC 36239 / CBS 767 / BCRC 21394 / JCM 1990 / NBRC 0083 / IGC 2968) (Yeast) protein is Protein ATC1/LIC4 (ATC1).